A 126-amino-acid polypeptide reads, in one-letter code: Histone H2B 1.1 (126 aa).

Over residues Met1–Lys12 the composition is skewed to low complexity. The segment at Met1–Lys35 is disordered. 2 positions are modified to N6-acetyllysine: Lys6 and Lys13. The residue at position 15 (Ser15) is a Phosphoserine. An N6-acetyllysine mark is found at Lys16 and Lys21. Ser113 carries an O-linked (GlcNAc) serine glycan. Residue Lys121 forms a Glycyl lysine isopeptide (Lys-Gly) (interchain with G-Cter in ubiquitin) linkage.

Belongs to the histone H2B family. The nucleosome is a histone octamer containing two molecules each of H2A, H2B, H3 and H4 assembled in one H3-H4 heterotetramer and two H2A-H2B heterodimers. The octamer wraps approximately 147 bp of DNA. Post-translationally, monoubiquitination of Lys-121 by BRE1 gives a specific tag for epigenetic transcriptional activation and is also prerequisite for histone H3 'Lys-4' and 'Lys-79' methylation. In terms of processing, phosphorylated on Ser-15 during developmentally programmed apoptosis; which may facilitate apoptotic chromatin condensation. GlcNAcylation at Ser-113 promotes monoubiquitination of Lys-121. It fluctuates in response to extracellular glucose, and associates with transcribed genes.

Its subcellular location is the nucleus. It is found in the chromosome. Its function is as follows. Core component of nucleosome. Nucleosomes wrap and compact DNA into chromatin, limiting DNA accessibility to the cellular machineries which require DNA as a template. Histones thereby play a central role in transcription regulation, DNA repair, DNA replication and chromosomal stability. DNA accessibility is regulated via a complex set of post-translational modifications of histones, also called histone code, and nucleosome remodeling. The chain is Histone H2B 1.1 from Xenopus laevis (African clawed frog).